The following is a 188-amino-acid chain: Phosphoribosylglycinamide formyltransferase (188 aa).

12 to 14 (GSN) provides a ligand contact to N(1)-(5-phospho-beta-D-ribosyl)glycinamide. Residues Lys-66, 91 to 94 (MRLI), and Asn-108 each bind (6R)-10-formyltetrahydrofolate. His-110 (proton donor) is an active-site residue.

This sequence belongs to the GART family.

The enzyme catalyses N(1)-(5-phospho-beta-D-ribosyl)glycinamide + (6R)-10-formyltetrahydrofolate = N(2)-formyl-N(1)-(5-phospho-beta-D-ribosyl)glycinamide + (6S)-5,6,7,8-tetrahydrofolate + H(+). Its pathway is purine metabolism; IMP biosynthesis via de novo pathway; N(2)-formyl-N(1)-(5-phospho-D-ribosyl)glycinamide from N(1)-(5-phospho-D-ribosyl)glycinamide (10-formyl THF route): step 1/1. Its function is as follows. Catalyzes the transfer of a formyl group from 10-formyltetrahydrofolate to 5-phospho-ribosyl-glycinamide (GAR), producing 5-phospho-ribosyl-N-formylglycinamide (FGAR) and tetrahydrofolate. This is Phosphoribosylglycinamide formyltransferase from Staphylococcus aureus (strain Mu50 / ATCC 700699).